Here is a 453-residue protein sequence, read N- to C-terminus: tRNA modification GTPase MnmE (453 aa).

(6S)-5-formyl-5,6,7,8-tetrahydrofolate is bound by residues arginine 23, glutamate 80, and lysine 120. A TrmE-type G domain is found at 216–375; that stretch reads GSKIVIIGKP…LIKYLKDLNC (160 aa). Asparagine 226 is a binding site for K(+). GTP contacts are provided by residues 226-231, 245-251, and 270-273; these read NSGKSS, TSIEGTT, and DTAG. Serine 230 lines the Mg(2+) pocket. The K(+) site is built by threonine 245, isoleucine 247, and threonine 250. Threonine 251 provides a ligand contact to Mg(2+). (6S)-5-formyl-5,6,7,8-tetrahydrofolate is bound at residue lysine 453.

This sequence belongs to the TRAFAC class TrmE-Era-EngA-EngB-Septin-like GTPase superfamily. TrmE GTPase family. As to quaternary structure, homodimer. Heterotetramer of two MnmE and two MnmG subunits. Requires K(+) as cofactor.

It localises to the cytoplasm. In terms of biological role, exhibits a very high intrinsic GTPase hydrolysis rate. Involved in the addition of a carboxymethylaminomethyl (cmnm) group at the wobble position (U34) of certain tRNAs, forming tRNA-cmnm(5)s(2)U34. The sequence is that of tRNA modification GTPase MnmE from Wigglesworthia glossinidia brevipalpis.